We begin with the raw amino-acid sequence, 207 residues long: MAGPATQSPMKLMALQLLLWHSALWTVQEATPLGPASSLPQSFLLKCLEQVRKIQGDGAALQEKLVSECATYKLCHPEELVLLGHSLGIPWAPLSSCPSQALQLAGCLSQLHSGLFLYQGLLQALEGISPELGPTLDTLQLDVADFATTIWQQMEELGMAPALQPTQGAMPAFASAFQRRAGGVLVASHLQSFLEVSYRVLRHLAQP.

An N-terminal signal peptide occupies residues 1–30; sequence MAGPATQSPMKLMALQLLLWHSALWTVQEA. Intrachain disulfides connect C69–C75 and C97–C107. T166 carries O-linked (GalNAc...) threonine glycosylation.

Belongs to the IL-6 superfamily. As to quaternary structure, monomer. In terms of processing, O-glycan consists of Gal-GalNAc disaccharide which can be modified with up to two sialic acid residues (done in recombinantly expressed G-CSF from CHO cells).

It is found in the secreted. Its function is as follows. Granulocyte/macrophage colony-stimulating factors are cytokines that act in hematopoiesis by controlling the production, differentiation, and function of 2 related white cell populations of the blood, the granulocytes and the monocytes-macrophages. This CSF induces granulocytes. This is Granulocyte colony-stimulating factor (CSF3) from Homo sapiens (Human).